The sequence spans 347 residues: MPTHHPITRQHWHHSWLSALALLCASLACGAKQVDVHDPVMTREGDTWYLFSTGPGITIYSSKDRVNWRYSDRAFGTEPTWAKRVSPSFDGHLWAPDIYQHKGLFYLYYSVSAFGKNTSAIGVTVNKTLNPASPDYRWEDKGIVIESVPQRDLWNAIDPAIIADDHGQVWMSFGSFWGGLKLFKLNDDLTRPAEPQEWHSIAKLERSVLMDDSQAGSAQIEAPFILRKGDYYYLFASWGLCCRKGDSTYHLVVGRSKQVTGPYLDKTGRDMNQGGGSLLIKGNKRWVGLGHNSAYTWDGKDYLVLHAYEAADNYLQKLKILNLHWDGEGWPQVDEKELDSYISQRLK.

The signal sequence occupies residues 1 to 31 (MPTHHPITRQHWHHSWLSALALLCASLACGA). Aspartate 35 contacts substrate. The active-site Proton acceptor is aspartate 38. Residues 90–92 (DGH), 115–116 (GK), asparagine 155, serine 175, and glutamate 221 contribute to the substrate site. Glutamate 221 (proton donor) is an active-site residue. Histidine 291 is a Ca(2+) binding site. Glutamine 316 is a binding site for substrate.

It belongs to the glycosyl hydrolase 43 family. Homodimer.

It is found in the secreted. It catalyses the reaction Hydrolysis of terminal non-reducing alpha-L-arabinofuranoside residues in alpha-L-arabinosides.. It participates in glycan metabolism; L-arabinan degradation. Its function is as follows. Involved in the degradation of arabinan and is a key enzyme in the complete degradation of the plant cell wall. Catalyzes the cleavage of the terminal alpha-(1-&gt;5)-arabinofuranosyl bonds of linear arabinan and carboxymethylarabinan to produce almost exclusively arabinotriose. This chain is Extracellular exo-alpha-(1-&gt;5)-L-arabinofuranosidase ArbA (arbA), found in Cellvibrio japonicus (strain Ueda107) (Pseudomonas fluorescens subsp. cellulosa).